We begin with the raw amino-acid sequence, 212 residues long: uncharacterized protein (212 aa).

Residues 11 to 31 (NLIFFQFIVYFFFISLTILII) form a helical membrane-spanning segment.

Its subcellular location is the membrane. This is an uncharacterized protein from Rickettsia prowazekii (strain Madrid E).